The primary structure comprises 142 residues: Small heat shock protein IbpB (142 aa).

The region spanning 26-137 is the sHSP domain; it reads AGESQSFPPY…AAQRIAISER (112 aa).

It belongs to the small heat shock protein (HSP20) family. As to quaternary structure, homodimer. Forms homomultimers of about 100-150 subunits at optimal growth temperatures. Conformation changes to oligomers at high temperatures or high ionic concentrations. The decrease in size of the multimers is accompanied by an increase in chaperone activity.

It localises to the cytoplasm. Functionally, associates with aggregated proteins, together with IbpA, to stabilize and protect them from irreversible denaturation and extensive proteolysis during heat shock and oxidative stress. Aggregated proteins bound to the IbpAB complex are more efficiently refolded and reactivated by the ATP-dependent chaperone systems ClpB and DnaK/DnaJ/GrpE. Its activity is ATP-independent. This chain is Small heat shock protein IbpB, found in Shigella flexneri serotype 5b (strain 8401).